The primary structure comprises 243 residues: Coproheme decarboxylase (243 aa).

Tyr145 is a catalytic residue. His168 is a binding site for Fe-coproporphyrin III.

It belongs to the ChdC family. Type 2 subfamily. It depends on Fe-coproporphyrin III as a cofactor.

It catalyses the reaction Fe-coproporphyrin III + 2 H2O2 + 2 H(+) = heme b + 2 CO2 + 4 H2O. The enzyme catalyses Fe-coproporphyrin III + H2O2 + H(+) = harderoheme III + CO2 + 2 H2O. It carries out the reaction harderoheme III + H2O2 + H(+) = heme b + CO2 + 2 H2O. It participates in porphyrin-containing compound metabolism; protoheme biosynthesis. Functionally, involved in coproporphyrin-dependent heme b biosynthesis. Catalyzes the decarboxylation of Fe-coproporphyrin III (coproheme) to heme b (protoheme IX), the last step of the pathway. The reaction occurs in a stepwise manner with a three-propionate intermediate. The polypeptide is Coproheme decarboxylase (Streptomyces coelicolor (strain ATCC BAA-471 / A3(2) / M145)).